The primary structure comprises 189 residues: Potassium-transporting ATPase KdpC subunit (189 aa).

A helical transmembrane segment spans residues 6 to 26 (PAIMMVLVFTIICGGIYPAVV).

It belongs to the KdpC family. The system is composed of three essential subunits: KdpA, KdpB and KdpC.

It localises to the cell inner membrane. Functionally, part of the high-affinity ATP-driven potassium transport (or Kdp) system, which catalyzes the hydrolysis of ATP coupled with the electrogenic transport of potassium into the cytoplasm. This subunit acts as a catalytic chaperone that increases the ATP-binding affinity of the ATP-hydrolyzing subunit KdpB by the formation of a transient KdpB/KdpC/ATP ternary complex. The protein is Potassium-transporting ATPase KdpC subunit of Geobacter metallireducens (strain ATCC 53774 / DSM 7210 / GS-15).